A 217-amino-acid polypeptide reads, in one-letter code: Adenylate kinase (217 aa).

An ATP-binding site is contributed by 10-15 (GAGKGT). The NMP stretch occupies residues 30 to 59 (STGDIFRSNVSQGTPLGVQAKRYMDAGELV). Residues T31, R36, 57–59 (ELV), 85–88 (GFPR), and Q92 contribute to the AMP site. The interval 126–163 (GRRTCRGCGKVWHVEFDAPSQEGRCDRCGAELFQRDDD) is LID. Position 127 (R127) interacts with ATP. The Zn(2+) site is built by C130, C133, C150, and C153. R160 and R171 together coordinate AMP. Residue G199 coordinates ATP.

This sequence belongs to the adenylate kinase family. In terms of assembly, monomer.

It is found in the cytoplasm. The catalysed reaction is AMP + ATP = 2 ADP. The protein operates within purine metabolism; AMP biosynthesis via salvage pathway; AMP from ADP: step 1/1. Its function is as follows. Catalyzes the reversible transfer of the terminal phosphate group between ATP and AMP. Plays an important role in cellular energy homeostasis and in adenine nucleotide metabolism. The polypeptide is Adenylate kinase (Salinispora tropica (strain ATCC BAA-916 / DSM 44818 / JCM 13857 / NBRC 105044 / CNB-440)).